An 801-amino-acid chain; its full sequence is Conserved oligomeric Golgi complex subunit 3 (801 aa).

The segment at Lys470 to Pro489 is disordered. The segment covering Thr471–Ala480 has biased composition (polar residues). Phosphoserine occurs at positions 507 and 647.

The protein belongs to the COG3 family. In terms of assembly, component of the conserved oligomeric Golgi (COG or Sec34/Sec35) complex which consists of eight different proteins COG1-COG8.

Its subcellular location is the golgi apparatus membrane. Acts as a component of the peripheral membrane COG complex that is involved in intra-Golgi protein trafficking. COG is located at the cis- Golgi, and regulates tethering of retrograde intra-Golgi vesicles and possibly a number of other membrane trafficking events. COG3 is also involved in actin cytoskeleton organization. This chain is Conserved oligomeric Golgi complex subunit 3 (COG3), found in Saccharomyces cerevisiae (strain ATCC 204508 / S288c) (Baker's yeast).